The chain runs to 552 residues: HTH-type transcriptional regulator SgrR (552 aa).

The 116-residue stretch at 1-116 (MPSARLQQQF…LVSHLGRSFR (116 aa)) folds into the HTH marR-type domain. Positions 26–49 (LNELAALLSCSRRHMRTLLNTMQD) form a DNA-binding region, H-T-H motif. Residues 163–492 (ELEADIAHHW…IDWQADAARW (330 aa)) form a solute-binding region.

In terms of biological role, activates the small RNA gene sgrS under glucose-phosphate stress conditions as well as yfdZ. Represses its own transcription under both stress and non-stress conditions. Might act as a sensor of the intracellular accumulation of phosphoglucose by binding these molecules in its C-terminal solute-binding domain. The sequence is that of HTH-type transcriptional regulator SgrR from Shigella dysenteriae serotype 1 (strain Sd197).